The chain runs to 511 residues: Probable eukaryotic translation initiation factor 4H (511 aa).

Disordered stretches follow at residues 25–63 (SWAD…DRGS) and 154–511 (TIRV…EVKI). Basic and acidic residues predominate over residues 39 to 51 (AREESGSGLKRGD). An RRM domain is found at 86–162 (FTAFIGNLSF…RTIRVNVAEA (77 aa)). The span at 179–196 (WRRSTPLASRESSSQPSR) shows a compositional bias: polar residues. 2 stretches are compositionally biased toward basic and acidic residues: residues 230-247 (VRRD…RDPG) and 261-270 (LAEKVDRDVP). Over residues 285–318 (LADTEQTWSRGTKLRTPTTTSRQSSADSTPSSGA) the composition is skewed to polar residues. Low complexity predominate over residues 331–349 (TAGSPSATANATPAAPASG). Phosphoserine is present on serine 334. Composition is skewed to basic and acidic residues over residues 360–388 (AARE…EKQK) and 394–419 (KPVE…DKVA). The segment covering 420 to 434 (GKPTTAPATTTNTGA) has biased composition (low complexity). Basic and acidic residues predominate over residues 438 to 448 (GSADRAKKDEQ). Residues 451-467 (EQVQPSRKSSQTGATSE) show a composition bias toward polar residues. A compositionally biased stretch (basic and acidic residues) spans 502–511 (VTKGVEEVKI).

It localises to the cytoplasm. The protein localises to the P-body. In terms of biological role, probable translation initiation factor. The protein is Probable eukaryotic translation initiation factor 4H of Cryptococcus neoformans var. grubii serotype A (strain H99 / ATCC 208821 / CBS 10515 / FGSC 9487) (Filobasidiella neoformans var. grubii).